The sequence spans 387 residues: MAAAVTWIPLLAGLLAGLRDTKAQQTTLHLLVGRVFVHPLEHATFLRLPEHVAVPPTVRLTYHAHLQGHPDLPRWLHYTQRSPYNPGFLYGSPTPEDRGYQVIEVTAYNRDSFDTTRQRLLLLIGDPEGPRLPYQAEFLVRSHDVEEVLPTTPANRFLTALGGLWEPGELQLLNITSALDRGGRVPLPIEGRKEGVYIKVGSATPFSTCLKMVASPDSYARCAQGQPPLLSCYDTLAPHFRVDWCNVSLVDKSVPEPLDEVPTPGDGILEHDPFFCPPTEATDRDFLTDALVTLLVPLLVALLLTLLLAYIMCFRREGRLKRDMATSDIQMFHHCSIHGNTEELRQMAASREVPRPLSTLPMFNVRTGERLPPRVDSAQMPLILDQH.

A signal peptide spans 1-23 (MAAAVTWIPLLAGLLAGLRDTKA). At 24-293 (QQTTLHLLVG…RDFLTDALVT (270 aa)) the chain is on the extracellular side. N-linked (GlcNAc...) asparagine glycosylation is found at Asn-174 and Asn-246. The chain crosses the membrane as a helical span at residues 294–314 (LLVPLLVALLLTLLLAYIMCF). The Cytoplasmic segment spans residues 315-387 (RREGRLKRDM…AQMPLILDQH (73 aa)). Phosphoserine is present on Ser-377.

Belongs to the sarcoglycan alpha/epsilon family. Cross-link to form 2 major subcomplexes: one consisting of SGCB, SGCD and SGCG and the other consisting of SGCB and SGCD. The association between SGCB and SGCG is particularly strong while SGCA is loosely associated with the other sarcoglycans. Interacts with the syntrophin SNTA1. Striated muscle, both skeletal and cardiac.

The protein resides in the cell membrane. It is found in the sarcolemma. The protein localises to the cytoplasm. Its subcellular location is the cytoskeleton. Functionally, component of the sarcoglycan complex, a subcomplex of the dystrophin-glycoprotein complex which forms a link between the F-actin cytoskeleton and the extracellular matrix. This chain is Alpha-sarcoglycan (Sgca), found in Mus musculus (Mouse).